A 207-amino-acid polypeptide reads, in one-letter code: Probable RNA 2'-phosphotransferase (207 aa).

The protein belongs to the KptA/TPT1 family.

Functionally, removes the 2'-phosphate from RNA via an intermediate in which the phosphate is ADP-ribosylated by NAD followed by a presumed transesterification to release the RNA and generate ADP-ribose 1''-2''-cyclic phosphate (APPR&gt;P). May function as an ADP-ribosylase. This chain is Probable RNA 2'-phosphotransferase, found in Methanosarcina acetivorans (strain ATCC 35395 / DSM 2834 / JCM 12185 / C2A).